The primary structure comprises 124 residues: Late histone H2B.2.2 (124 aa).

Positions 1 to 32 (MPAKQTSGKGAKKAGKAKGRPSGASKTRRRKR) are disordered. A compositionally biased stretch (basic residues) spans 10–19 (GAKKAGKAKG). Residue serine 111 is glycosylated (O-linked (GlcNAc) serine). Lysine 119 is covalently cross-linked (Glycyl lysine isopeptide (Lys-Gly) (interchain with G-Cter in ubiquitin)).

The protein belongs to the histone H2B family. The nucleosome is a histone octamer containing two molecules each of H2A, H2B, H3 and H4 assembled in one H3-H4 heterotetramer and two H2A-H2B heterodimers. The octamer wraps approximately 147 bp of DNA. In terms of processing, monoubiquitination of Lys-119 gives a specific tag for epigenetic transcriptional activation and is also prerequisite for histone H3 'Lys-4' and 'Lys-79' methylation. Post-translationally, glcNAcylation at Ser-111 promotes monoubiquitination of Lys-119. It fluctuates in response to extracellular glucose, and associates with transcribed genes.

The protein resides in the nucleus. It localises to the chromosome. In terms of biological role, core component of nucleosome. Nucleosomes wrap and compact DNA into chromatin, limiting DNA accessibility to the cellular machineries which require DNA as a template. Histones thereby play a central role in transcription regulation, DNA repair, DNA replication and chromosomal stability. DNA accessibility is regulated via a complex set of post-translational modifications of histones, also called histone code, and nucleosome remodeling. This Psammechinus miliaris (Green sea urchin) protein is Late histone H2B.2.2.